The sequence spans 159 residues: Phosphopantetheine adenylyltransferase (159 aa).

Residue threonine 10 coordinates substrate. Residues threonine 10–phenylalanine 11 and histidine 18 contribute to the ATP site. Residues lysine 42, methionine 74, and arginine 88 each contribute to the substrate site. ATP is bound by residues glycine 89–arginine 91, glutamate 99, and tryptophan 124–serine 130.

Belongs to the bacterial CoaD family. As to quaternary structure, homohexamer. The cofactor is Mg(2+).

Its subcellular location is the cytoplasm. It carries out the reaction (R)-4'-phosphopantetheine + ATP + H(+) = 3'-dephospho-CoA + diphosphate. It functions in the pathway cofactor biosynthesis; coenzyme A biosynthesis; CoA from (R)-pantothenate: step 4/5. Its function is as follows. Reversibly transfers an adenylyl group from ATP to 4'-phosphopantetheine, yielding dephospho-CoA (dPCoA) and pyrophosphate. In Shigella sonnei (strain Ss046), this protein is Phosphopantetheine adenylyltransferase.